The following is a 1796-amino-acid chain: Non-reducing polyketide synthase nscA (1796 aa).

An N-terminal acylcarrier protein transacylase domain (SAT) region spans residues 18 to 256; the sequence is DDLKDLFRRL…PLPVYDGLCH (239 aa). Residues 392 to 825 form the Ketosynthase family 3 (KS3) domain; it reads SSKLAIVGMA…GGNTTLLLED (434 aa). Residues cysteine 565, histidine 700, and histidine 743 each act as for beta-ketoacyl synthase activity in the active site. The segment at 931–1251 is malonyl-CoA:ACP transacylase (MAT) domain; sequence FTGQGAYYSG…SLVTLHLAGL (321 aa). The product template (PT) domain stretch occupies residues 1317–1636; sequence TSLVHQITAE…RLLMDRFFSP (320 aa). The N-terminal hotdog fold stretch occupies residues 1321–1457; sequence HQITAETVEA…ATVRFEDPVA (137 aa). The PKS/mFAS DH domain maps to 1321–1631; sequence HQITAETVEA…FRRVPRLLMD (311 aa). Histidine 1353 serves as the catalytic Proton acceptor; for dehydratase activity. A C-terminal hotdog fold region spans residues 1485 to 1631; that stretch reads ASRLSKPLAY…FRRVPRLLMD (147 aa). Aspartate 1542 functions as the Proton donor; for dehydratase activity in the catalytic mechanism. The segment at 1688 to 1720 is disordered; that stretch reads TPESTPPLAPSSESSTPKESPIATPPESERADP. Residues 1697-1708 are compositionally biased toward low complexity; sequence PSSESSTPKESP. The 78-residue stretch at 1719 to 1796 folds into the Carrier domain; the sequence is DPMDNMVSQC…EMTAWIEEYC (78 aa). Residue serine 1756 is modified to O-(pantetheine 4'-phosphoryl)serine.

Requires pantetheine 4'-phosphate as cofactor.

It participates in secondary metabolite biosynthesis. In terms of biological role, non-reducing polyketide synthase; part of the gene cluster that mediates the biosynthesis of neosartoricin B, a prenylated anthracenone that probably exhibits T-cell antiproliferative activity, suggestive of a physiological role as an immunosuppressive agent. The non-reducing polyketide synthase nscA probably synthesizes and cyclizes the decaketide backbone. The hydrolase nscB then mediates the product release through hydrolysis followed by spontaneous decarboxylation. The prenyltransferase nscD catalyzes the addition of the dimethylallyl group to the aromatic C5. The FAD-dependent monooxygenase nscC is then responsible for the stereospecific hydroxylation at C2. Neosartoricin B can be converted into two additional compounds neosartoricins C and D. Neosartoricin C is a spirocyclic compound that is cyclized through the attack of C3 hydroxyl on C14, followed by dehydration. On the other hand, neosartoricin D is a further cyclized compound in which attack of C2 on C14 in neosartoricin C results in the formation of the acetal-containing dioxabicyclo-octanone ring. Both of these compounds are novel and possibly represent related metabolites of the gene cluster. The sequence is that of Non-reducing polyketide synthase nscA from Arthroderma otae (strain ATCC MYA-4605 / CBS 113480) (Microsporum canis).